A 394-amino-acid polypeptide reads, in one-letter code: MKYPTWLRRIGGYLLAFAVGTAFGIANLPHAVAAADDLPPAPVITAQASVPLTSESFVAAAVSRSGPAVVRIDTETVVTRRTDPILDDPFFQEFFGRSFPVPPRERRIAGQGSGFIIDNSGIILTNAHVVDGASKVVVTLRDGRTFDGQVRGTDEVTDLAVVKIEPQGSALPVAPLGTSSNLQVGDWAIAVGNPVGLDNTVTLGIISTLGRSAAQAGIPDKRVEFIQTDAAINPGNSGGPLLNARGEVIGINTAIRADATGIGFAIPIDQAKAIQNTLAAGGTVPHPYIGVQMMNITVDQAQQNNRNPNSPFIIPEVDGILVMRVLPGTPAERAGIRRGDVIVAVDGTPISDGARLQRIVEQAGLNKALKLDLLRGDRRLSLTVQTAQLRNPTS.

The first 24 residues, M1–G24, serve as a signal peptide directing secretion. In terms of domain architecture, PDZ spans M293–D377.

Belongs to the peptidase S1C family.

It is found in the periplasm. Its function is as follows. A putative protease, its function overlaps that of the related putative proteases HhoB and HtrA. The chain is Putative serine protease HhoA (hhoA) from Synechocystis sp. (strain ATCC 27184 / PCC 6803 / Kazusa).